Here is a 1574-residue protein sequence, read N- to C-terminus: Plexin-C1 (1574 aa).

The N-terminal stretch at 1–34 (MEVSRRKTPPRPPYPAAPLPLIAYLLALAAPARG) is a signal peptide. Positions 35–452 (ADEPVWRSEQ…AGKEVRRIPV (418 aa)) constitute a Sema domain. The Extracellular segment spans residues 35-950 (ADEPVWRSEQ…YVEQESVPST (916 aa)). Cys64 and Cys87 form a disulfide bridge. N-linked (GlcNAc...) asparagine glycosylation is found at Asn86, Asn143, and Asn149. Cysteines 156 and 194 form a disulfide. Asn252 carries an N-linked (GlcNAc...) asparagine glycan. Cys283 and Cys329 are joined by a disulfide. N-linked (GlcNAc...) asparagine glycans are attached at residues Asn386 and Asn407. Intrachain disulfides connect Cys455-Cys472, Cys461-Cys506, Cys464-Cys481, and Cys475-Cys487. 3 N-linked (GlcNAc...) asparagine glycosylation sites follow: Asn694, Asn773, and Asn802. The helical transmembrane segment at 951-971 (WYFLIALPILLAIVIVVAVVV) threads the bilayer. The Cytoplasmic segment spans residues 972 to 1574 (TRYKSKELSR…FDEKKKCKWM (603 aa)). Ser984 is subject to Phosphoserine.

This sequence belongs to the plexin family. In terms of assembly, monomer. Homodimer. Interacts with SEMA7A. Detected on dendritic cells, skin Langerhans cells and neutrophils (at protein level).

The protein resides in the membrane. Functionally, receptor for SEMA7A, for vaccinia virus semaphorin A39R and for herpesvirus Sema protein. Binding of semaphorins triggers cellular responses leading to the rearrangement of the cytoskeleton and to secretion of IL6 and IL8. This chain is Plexin-C1 (Plxnc1), found in Mus musculus (Mouse).